The following is a 1054-amino-acid chain: Filament-like plant protein 6 (1054 aa).

Coiled coils occupy residues 64–139, 174–200, and 250–341; these read VQIK…VKQH, AEDRAAHLDGALKECMRQIRNLKKDHE, and SNML…RKKL. Disordered regions lie at residues 359 to 390 and 448 to 506; these read RDSGDARQKRSPVKVSSPCKSPGGYSSTGSEF and EAQL…KEKD. 3 stretches are compositionally biased toward low complexity: residues 371–380, 450–461, and 470–494; these read VKVSSPCKSP, QLQQNNSQKSSL, and SNPSSSISVSEDGNDDSGSCSGSLS. Positions 389 to 463 form a coiled coil; the sequence is EFSLDNAQKF…NNSQKSSLEV (75 aa). Coiled-coil stretches lie at residues 637-666 and 788-944; these read QNLVEDCHLAEQKLQSIHQDLKNAVSRIHD and ESDS…IFVL. Positions 951–1054 are disordered; the sequence is FRPQPEQMRS…SRFFSSKSGY (104 aa). A compositionally biased stretch (low complexity) spans 1007-1032; that stretch reads PSDSETSDTTTSPSRVGSRLSRSGSS.

This sequence belongs to the FPP family. In terms of assembly, interacts with WPP/MAF proteins.

In Arabidopsis thaliana (Mouse-ear cress), this protein is Filament-like plant protein 6 (FPP6).